Here is an 818-residue protein sequence, read N- to C-terminus: BDNF/NT-3 growth factors receptor (818 aa).

Residues 1–31 (MVSWRRRPGPGLARLWGLCCLVLGCWRGALG) form the signal peptide. Cystine bridges form between Cys-32/Cys-38 and Cys-36/Cys-45. At 32–426 (CPASCRCSSW…DVSNKENEDS (395 aa)) the chain is on the extracellular side. A glycan (N-linked (GlcNAc...) asparagine) is linked at Asn-66. One copy of the LRR 1 repeat lies at 71-92 (YIANQRKLESINDNEVGFYVGL). Asn-94 carries an N-linked (GlcNAc...) asparagine glycan. Residues 95-116 (LTVVDSGLRFVSRQAFVKNINL) form an LRR 2 repeat. Asn-120 is a glycosylation site (N-linked (GlcNAc...) asparagine). Cystine bridges form between Cys-151/Cys-175 and Cys-153/Cys-193. One can recognise an Ig-like C2-type 1 domain in the interval 196-281 (PSANLSNYNI…GEVQTSAELT (86 aa)). Asn-199, Asn-204, Asn-226, Asn-253, Asn-287, Asn-324, and Asn-337 each carry an N-linked (GlcNAc...) asparagine glycan. Cys-217 and Cys-265 are disulfide-bonded. The 70-residue stretch at 295–364 (TPDHHWCIPF…NGAYTLLAKN (70 aa)) folds into the Ig-like C2-type 2 domain. A disulfide bridge links Cys-301 with Cys-344. The segment at 384 to 394 (GSGPIVDPDVY) is provides specificity for BDNF as ligand versus NTF3 and NTF4. Residues 400–418 (PNDLGDTTNNSNQITSPDV) show a composition bias toward polar residues. Residues 400–420 (PNDLGDTTNNSNQITSPDVSN) form a disordered region. The N-linked (GlcNAc...) asparagine glycan is linked to Asn-408. Residues 427-450 (ITVYVVVGIAALVCTGLVIMLIIL) traverse the membrane as a helical segment. The Cytoplasmic portion of the chain corresponds to 451 to 818 (KFGRHSKFGM…ASPVYLDILG (368 aa)). The disordered stretch occupies residues 469-494 (NDDDSASPLHHISNGSNTPSSSEGGP). Over residues 481–491 (SNGSNTPSSSE) the composition is skewed to polar residues. Position 512 is a phosphotyrosine; by autocatalysis (Tyr-512). The region spanning 534–803 (IVLKRELGEG…LNIKEIHSLL (270 aa)) is the Protein kinase domain. Residues 540–548 (LGEGAFGKV) and Lys-568 each bind ATP. The active-site Proton acceptor is Asp-672. A phosphotyrosine; by autocatalysis mark is found at Tyr-698, Tyr-702, Tyr-703, and Tyr-813.

The protein belongs to the protein kinase superfamily. Tyr protein kinase family. Insulin receptor subfamily. As to quaternary structure, exists in a dynamic equilibrium between monomeric (low affinity) and dimeric (high affinity) structures. Interacts (phosphorylated upon activation by BDNF) with SHC1; mediates SHC1 phosphorylation and activation. Interacts (phosphorylated upon activation by BDNF) with PLCG1 and/or PLCG2; mediates PLCG1 phosphorylation and activation. Interacts with SH2B1 and SH2B2. Interacts with NGFR; may regulate the ligand specificity of the receptor. Interacts with SORCS2; this interaction is important for normal targeting to post-synaptic densities in response to high-frequency stimulation. Interacts (phosphorylated upon ligand-binding) with SH2D1A; regulates NTRK2. Interacts with SQSTM1 and KIDINS220. Interacts (phosphorylated upon ligand-binding) with FRS2; activates the MAPK signaling pathway. Interacts with APPL1. Interacts with MAPK8IP3/JIP3 and KLC1; interaction with KLC1 is mediated by MAPK8IP3/JIP3. In terms of processing, ligand-mediated auto-phosphorylation. Detected in embryonic brain and orsal root ganglia.

Its subcellular location is the cell membrane. It is found in the endosome membrane. It localises to the cell projection. The protein localises to the axon. The protein resides in the dendrite. Its subcellular location is the cytoplasm. It is found in the perinuclear region. It localises to the postsynaptic density. The enzyme catalyses L-tyrosyl-[protein] + ATP = O-phospho-L-tyrosyl-[protein] + ADP + H(+). With respect to regulation, the neuronal activity and the influx of calcium positively regulate the kinase activity and the internalization of the receptor which are both important for active signaling. Regulated by NGFR that may control the internalization of the receptor. NGFR may also stimulate the activation by BDNF compared to NTF3 and NTF4. The formation of active receptors dimers able to fully transduce the ligand-mediated signal, may be negatively regulated by the formation of inactive heterodimers with the non-catalytic isoforms. Receptor tyrosine kinase involved in the development and the maturation of the central and the peripheral nervous systems through regulation of neuron survival, proliferation, migration, differentiation, and synapse formation and plasticity. Receptor for BDNF/brain-derived neurotrophic factor and NTF4/neurotrophin-4. Alternatively can also bind NTF3/neurotrophin-3 which is less efficient in activating the receptor but regulates neuron survival through NTRK2. Upon ligand-binding, undergoes homodimerization, autophosphorylation and activation. Recruits, phosphorylates and/or activates several downstream effectors including SHC1, FRS2, SH2B1, SH2B2 and PLCG1 that regulate distinct overlapping signaling cascades. Through SHC1, FRS2, SH2B1, SH2B2 activates the GRB2-Ras-MAPK cascade that regulates for instance neuronal differentiation including neurite outgrowth. Through the same effectors controls the Ras-PI3 kinase-AKT1 signaling cascade that mainly regulates growth and survival. Through PLCG1 and the downstream protein kinase C-regulated pathways controls synaptic plasticity. Thereby, plays a role in learning and memory by regulating both short term synaptic function and long-term potentiation. PLCG1 also leads to NF-Kappa-B activation and the transcription of genes involved in cell survival. Hence, it is able to suppress anoikis, the apoptosis resulting from loss of cell-matrix interactions. May also play a role in neutrophin-dependent calcium signaling in glial cells and mediate communication between neurons and glia. This chain is BDNF/NT-3 growth factors receptor (NTRK2), found in Gallus gallus (Chicken).